The following is a 263-amino-acid chain: Probable methylthioribulose-1-phosphate dehydratase (263 aa).

Residue C102 coordinates substrate. Positions 120 and 122 each coordinate Zn(2+). The Proton donor/acceptor role is filled by E144. A Zn(2+)-binding site is contributed by H200.

This sequence belongs to the aldolase class II family. MtnB subfamily. Zn(2+) is required as a cofactor.

Its subcellular location is the cytoplasm. It catalyses the reaction 5-(methylsulfanyl)-D-ribulose 1-phosphate = 5-methylsulfanyl-2,3-dioxopentyl phosphate + H2O. The protein operates within amino-acid biosynthesis; L-methionine biosynthesis via salvage pathway; L-methionine from S-methyl-5-thio-alpha-D-ribose 1-phosphate: step 2/6. Functionally, catalyzes the dehydration of methylthioribulose-1-phosphate (MTRu-1-P) into 2,3-diketo-5-methylthiopentyl-1-phosphate (DK-MTP-1-P). In Caenorhabditis elegans, this protein is Probable methylthioribulose-1-phosphate dehydratase.